The following is a 330-amino-acid chain: Ribose operon repressor (330 aa).

One can recognise an HTH lacI-type domain in the interval 2–56 (ATMKDVARLAGVSTSTVSHVINKDRFVSEAITAKVEAAIKELNYAPSALARSLKL). Positions 4–23 (MKDVARLAGVSTSTVSHVIN) form a DNA-binding region, H-T-H motif.

Transcriptional repressor for the ribose rbsDACBK operon. RbsR binds to a region of perfect dyad symmetry spanning the rbs operon transcriptional start site. The affinity for the rbs operator is reduced by addition of ribose, consistent with ribose being the inducer of the operon. In Escherichia coli O6:H1 (strain CFT073 / ATCC 700928 / UPEC), this protein is Ribose operon repressor (rbsR).